A 249-amino-acid polypeptide reads, in one-letter code: SRR1-like protein (249 aa).

Residues 1 to 40 (MAAAALEPWSAVAPRRRKRAAGRRPRPGEGPRAEPEADGE) are disordered. The segment covering 14 to 25 (PRRRKRAAGRRP) has biased composition (basic residues). The span at 26–40 (RPGEGPRAEPEADGE) shows a compositional bias: basic and acidic residues.

The protein belongs to the SRR1 family.

Its subcellular location is the cytoplasm. In terms of biological role, plays a role in the regulation of heme biosynthesis and in the regulation of the expression of core clock genes. The protein is SRR1-like protein (Srrd) of Mus musculus (Mouse).